A 529-amino-acid chain; its full sequence is tRNA-2-methylthio-N(6)-dimethylallyladenosine synthase (529 aa).

The region spanning 18–134 is the MTTase N-terminal domain; sequence RTYQVRTYGC…LPTLLERARH (117 aa). Residues Cys27, Cys63, Cys97, Cys171, Cys175, and Cys178 each contribute to the [4Fe-4S] cluster site. The region spanning 157-404 is the Radical SAM core domain; sequence RESAYAGWVS…IELQERISLE (248 aa). The TRAM domain maps to 407-486; that stretch reads QAQVGRTLEL…PHHLIADGAL (80 aa).

This sequence belongs to the methylthiotransferase family. MiaB subfamily. As to quaternary structure, monomer. It depends on [4Fe-4S] cluster as a cofactor.

It localises to the cytoplasm. The catalysed reaction is N(6)-dimethylallyladenosine(37) in tRNA + (sulfur carrier)-SH + AH2 + 2 S-adenosyl-L-methionine = 2-methylsulfanyl-N(6)-dimethylallyladenosine(37) in tRNA + (sulfur carrier)-H + 5'-deoxyadenosine + L-methionine + A + S-adenosyl-L-homocysteine + 2 H(+). Its function is as follows. Catalyzes the methylthiolation of N6-(dimethylallyl)adenosine (i(6)A), leading to the formation of 2-methylthio-N6-(dimethylallyl)adenosine (ms(2)i(6)A) at position 37 in tRNAs that read codons beginning with uridine. This Mycobacterium sp. (strain KMS) protein is tRNA-2-methylthio-N(6)-dimethylallyladenosine synthase.